Consider the following 336-residue polypeptide: MEKIYSAPITVLGAGSYGTALAIALSRNGHKTYLWGHNPQKMAQMAVRRMSEEFLPDIPFPEALEIESDLATALTRSKDILIVVPSHVFSEVLQQIQPLLTSEHRIMWATKGLERDTGRLLQEVALQILGDRYPLAVLSGPTFAKELAQGLPTAIALSSTDPQFADEMQQRIHCSKAFRVYLNSDMVGVQLGGAIKNVIAIGTGISDGMGFGANARTALITRGLAEISRLGLSLGANPTTFIGMAGLGDLVLTCTDNQSRNRRFGLMLGQGRNAQEAMAEIGQVVEGFYNTKEAYLLAQKQGIEMPIVEQIYQILFCGKHASDVAKTLLGRERKGE.

S16, Y17, H37, and K111 together coordinate NADPH. Sn-glycerol 3-phosphate is bound by residues K111, G140, and T142. Residue A144 coordinates NADPH. Residues K196, D249, S259, R260, and N261 each coordinate sn-glycerol 3-phosphate. K196 acts as the Proton acceptor in catalysis. R260 lines the NADPH pocket. Residues V284 and E286 each contribute to the NADPH site.

It belongs to the NAD-dependent glycerol-3-phosphate dehydrogenase family.

It is found in the cytoplasm. It carries out the reaction sn-glycerol 3-phosphate + NAD(+) = dihydroxyacetone phosphate + NADH + H(+). It catalyses the reaction sn-glycerol 3-phosphate + NADP(+) = dihydroxyacetone phosphate + NADPH + H(+). It functions in the pathway membrane lipid metabolism; glycerophospholipid metabolism. In terms of biological role, catalyzes the reduction of the glycolytic intermediate dihydroxyacetone phosphate (DHAP) to sn-glycerol 3-phosphate (G3P), the key precursor for phospholipid synthesis. The sequence is that of Glycerol-3-phosphate dehydrogenase [NAD(P)+] from Glaesserella parasuis serovar 5 (strain SH0165) (Haemophilus parasuis).